The primary structure comprises 294 residues: tRNA dimethylallyltransferase (294 aa).

An ATP-binding site is contributed by 10–17 (GPTAVGKT). 12 to 17 (TAVGKT) is a binding site for substrate. An interaction with substrate tRNA region spans residues 35–38 (DSQQ).

This sequence belongs to the IPP transferase family. Monomer. Mg(2+) is required as a cofactor.

The enzyme catalyses adenosine(37) in tRNA + dimethylallyl diphosphate = N(6)-dimethylallyladenosine(37) in tRNA + diphosphate. In terms of biological role, catalyzes the transfer of a dimethylallyl group onto the adenine at position 37 in tRNAs that read codons beginning with uridine, leading to the formation of N6-(dimethylallyl)adenosine (i(6)A). The protein is tRNA dimethylallyltransferase of Streptococcus sanguinis (strain SK36).